We begin with the raw amino-acid sequence, 415 residues long: Peptide chain release factor subunit 1-1 (415 aa).

The protein belongs to the eukaryotic release factor 1 family. In terms of assembly, heterodimer of two subunits, one of which binds GTP.

The protein localises to the cytoplasm. Functionally, directs the termination of nascent peptide synthesis (translation) in response to the termination codons UAA, UAG and UGA. This chain is Peptide chain release factor subunit 1-1, found in Methanosarcina acetivorans (strain ATCC 35395 / DSM 2834 / JCM 12185 / C2A).